Reading from the N-terminus, the 454-residue chain is tRNA modification GTPase MnmE (454 aa).

The (6S)-5-formyl-5,6,7,8-tetrahydrofolate site is built by Arg-23, Glu-80, and Lys-120. Residues 216–377 (GMKVVIAGRP…LRNHLKQSMG (162 aa)) enclose the TrmE-type G domain. A K(+)-binding site is contributed by Asn-226. GTP is bound by residues 226–231 (NAGKSS), 245–251 (TDIAGTT), 270–273 (DTAG), 335–338 (NKAD), and 358–360 (SAR). Residue Ser-230 participates in Mg(2+) binding. The K(+) site is built by Thr-245, Ile-247, and Thr-250. Position 251 (Thr-251) interacts with Mg(2+). Lys-454 lines the (6S)-5-formyl-5,6,7,8-tetrahydrofolate pocket.

Belongs to the TRAFAC class TrmE-Era-EngA-EngB-Septin-like GTPase superfamily. TrmE GTPase family. In terms of assembly, homodimer. Heterotetramer of two MnmE and two MnmG subunits. Requires K(+) as cofactor.

Its subcellular location is the cytoplasm. Its function is as follows. Exhibits a very high intrinsic GTPase hydrolysis rate. Involved in the addition of a carboxymethylaminomethyl (cmnm) group at the wobble position (U34) of certain tRNAs, forming tRNA-cmnm(5)s(2)U34. The polypeptide is tRNA modification GTPase MnmE (Klebsiella pneumoniae subsp. pneumoniae (strain ATCC 700721 / MGH 78578)).